A 448-amino-acid chain; its full sequence is N-succinylarginine dihydrolase (448 aa).

Substrate-binding positions include 19–28 (GGLSYGNVAS), asparagine 110, and 137–138 (HR). Residue glutamate 174 is part of the active site. Arginine 214 contributes to the substrate binding site. The active site involves histidine 250. Residues aspartate 252 and asparagine 365 each coordinate substrate. The active-site Nucleophile is the cysteine 371.

This sequence belongs to the succinylarginine dihydrolase family. As to quaternary structure, homodimer.

The catalysed reaction is N(2)-succinyl-L-arginine + 2 H2O + 2 H(+) = N(2)-succinyl-L-ornithine + 2 NH4(+) + CO2. It participates in amino-acid degradation; L-arginine degradation via AST pathway; L-glutamate and succinate from L-arginine: step 2/5. Catalyzes the hydrolysis of N(2)-succinylarginine into N(2)-succinylornithine, ammonia and CO(2). The protein is N-succinylarginine dihydrolase of Pseudomonas aeruginosa (strain LESB58).